The sequence spans 202 residues: Small ribosomal subunit protein uS4 (202 aa).

Positions 1-13 (MSRYRGPRLRVTR) are enriched in basic residues. The segment at 1–42 (MSRYRGPRLRVTRRLGELPGLTRKASKKSNPPGQHGQARRKR) is disordered. The 63-residue stretch at 90–152 (NRLDNVCFRL…KASKKLVEGN (63 aa)) folds into the S4 RNA-binding domain.

The protein belongs to the universal ribosomal protein uS4 family. In terms of assembly, part of the 30S ribosomal subunit. Contacts protein S5. The interaction surface between S4 and S5 is involved in control of translational fidelity.

One of the primary rRNA binding proteins, it binds directly to 16S rRNA where it nucleates assembly of the body of the 30S subunit. In terms of biological role, with S5 and S12 plays an important role in translational accuracy. The sequence is that of Small ribosomal subunit protein uS4 from Prochlorococcus marinus (strain MIT 9312).